We begin with the raw amino-acid sequence, 325 residues long: Homeobox protein Hox-A1a (325 aa).

Residues Thr-187–Lys-192 carry the Antp-type hexapeptide motif. Disordered stretches follow at residues Lys-194–Val-215 and Arg-264–Asn-325. Residues Pro-212–Glu-271 constitute a DNA-binding region (homeobox). Residues Ser-285 to Lys-300 show a composition bias toward basic and acidic residues. The span at Ser-301–Ser-317 shows a compositional bias: low complexity.

The protein belongs to the Antp homeobox family. Labial subfamily.

It localises to the nucleus. Its function is as follows. Sequence-specific transcription factor which is part of a developmental regulatory system that provides cells with specific positional identities on the anterior-posterior axis. This is Homeobox protein Hox-A1a (hoxa1a) from Takifugu rubripes (Japanese pufferfish).